Reading from the N-terminus, the 284-residue chain is uncharacterized protein (284 aa).

The N-terminal stretch at 1–20 (MLHNIQSILQFLLFVSSVQA) is a signal peptide. An Apple domain is found at 38–121 (CFEFKKNYWI…FTVNFFRNIC (84 aa)). 3 disulfide bridges follow: C38–C121, C63–C89, and C67–C77. Residue N256 is glycosylated (N-linked (GlcNAc...) asparagine). A helical membrane pass occupies residues 264–284 (SSTGLKFTTGLLIILVVFLFL).

It is found in the membrane. This is an uncharacterized protein from Caenorhabditis elegans.